Consider the following 227-residue polypeptide: PKHD-type hydroxylase Pden_4677 (227 aa).

The Fe2OG dioxygenase domain maps to 78 to 178 (HILPPMFNRY…RWASFFWAQS (101 aa)). The Fe cation site is built by histidine 96, aspartate 98, and histidine 159. Residue arginine 169 participates in 2-oxoglutarate binding.

The cofactor is Fe(2+). It depends on L-ascorbate as a cofactor.

In Paracoccus denitrificans (strain Pd 1222), this protein is PKHD-type hydroxylase Pden_4677.